Reading from the N-terminus, the 360-residue chain is G-protein coupled receptor 15 (360 aa).

Topologically, residues 1–33 are extracellular; sequence MEPATALLIVDYYDYTSPDPPFLETPSHLSYTS. The helical transmembrane segment at 34–54 threads the bilayer; that stretch reads VFLPIFYTVVFLTGVVGNFIL. Over 55-69 the chain is Cytoplasmic; the sequence is MIALHFKRGNRRLID. The helical transmembrane segment at 70 to 90 threads the bilayer; it reads IFIINLAASDFIFLVTVPLWM. At 91–120 the chain is on the extracellular side; sequence DKEASLGLWRTGSFLCKGSSYVISVNMHCS. The chain crosses the membrane as a helical span at residues 121–141; sequence VFLLTCMSMDRYLAIMHPALA. The Cytoplasmic segment spans residues 142-149; the sequence is KRLRRRSS. The chain crosses the membrane as a helical span at residues 150 to 170; sequence AYAVCAVVWIISCVLGLPTLL. Residues 171-192 are Extracellular-facing; sequence SRELTHIEGKPYCAEKKPTSLK. Residues 193–213 form a helical membrane-spanning segment; it reads LMWGLVALITTFFVPLLSIVT. The Cytoplasmic segment spans residues 214 to 239; the sequence is CYCCITRRLCAHYQQSGKHNKKLKKS. The helical transmembrane segment at 240 to 260 threads the bilayer; the sequence is IKIVIIAVAAFTVSWVPFNTF. Topologically, residues 261–284 are extracellular; sequence KLLAIVSGFQPEGLFHSEALQLAM. Residues 285–305 form a helical membrane-spanning segment; it reads NVTGPLAFASSCVNPLIYYVF. The Cytoplasmic segment spans residues 306–360; the sequence is DSYIRRAIVRCLCPCLKTHNFGSSTETSDSHLTKALSNFIHAEDFIRRRKRSVSL. Serine 359 carries the phosphoserine modification.

Belongs to the G-protein coupled receptor 1 family. Interacts with adapter YWHAE; this interaction promotes ER-to-Golgi transport of GPR15. Post-translationally, phosphorylation is necessary for YWHAE binding and efficient surface expression. O-glycosylated. Sialylated O-glycans in the N-terminal tail inhibits binding of GPR15LG. In terms of processing, sulfation is required for efficient binding of GPR15LG. As to expression, highly expressed in gut tissues and lymphoid organs, largely restricted to TCRbeta+ cells. Expressed in fetal thymic dendritic epidermal T-cell precursors.

The protein resides in the cell membrane. Functionally, g protein-coupled receptor that plays an important role in immune homeostasis. Acts via its natural ligand GPR15LG, a chemokine-like polypeptide strongly expressed in gastrointestinal tissues. GPR15-GPR15LG signaling axis regulates intestinal homeostasis and inflammation through the migration of immune cells. Controls thereby the specific homing of T-cells, particularly FOXP3+ regulatory T-cells (Tregs), to the large intestine lamina propria. Also required for skin localization of thymus-derived dendritic epidermal T-cells. Plays an important role in mediating cytoprotective function as well as angiogenesis of thrombomodulin. Mechanistically, preferentially signals through the Gi/o pathway to inhibit adenylate cyclase activity and activate a phosphatidylinositol-calcium second messenger system that regulates the release of Ca(2+) ions from intracellular stores. The protein is G-protein coupled receptor 15 (Gpr15) of Mus musculus (Mouse).